Reading from the N-terminus, the 447-residue chain is Probable ribosomal RNA small subunit methyltransferase B (447 aa).

Residues C259–K265, D283, D310, and D329 contribute to the S-adenosyl-L-methionine site. The Nucleophile role is filled by C382.

This sequence belongs to the class I-like SAM-binding methyltransferase superfamily. RsmB/NOP family.

The protein localises to the cytoplasm. It carries out the reaction cytidine(967) in 16S rRNA + S-adenosyl-L-methionine = 5-methylcytidine(967) in 16S rRNA + S-adenosyl-L-homocysteine + H(+). In terms of biological role, specifically methylates the cytosine at position 967 (m5C967) of 16S rRNA. This Bacillus subtilis (strain 168) protein is Probable ribosomal RNA small subunit methyltransferase B.